We begin with the raw amino-acid sequence, 187 residues long: Shikimate kinase (187 aa).

G14 to T19 contacts ATP. S18 is a binding site for Mg(2+). The substrate site is built by D36, R60, and G82. Residue R120 participates in ATP binding. R147 serves as a coordination point for substrate.

Belongs to the shikimate kinase family. As to quaternary structure, monomer. The cofactor is Mg(2+).

The protein resides in the cytoplasm. The catalysed reaction is shikimate + ATP = 3-phosphoshikimate + ADP + H(+). It functions in the pathway metabolic intermediate biosynthesis; chorismate biosynthesis; chorismate from D-erythrose 4-phosphate and phosphoenolpyruvate: step 5/7. Its function is as follows. Catalyzes the specific phosphorylation of the 3-hydroxyl group of shikimic acid using ATP as a cosubstrate. The protein is Shikimate kinase of Chlorobaculum parvum (strain DSM 263 / NCIMB 8327) (Chlorobium vibrioforme subsp. thiosulfatophilum).